A 315-amino-acid polypeptide reads, in one-letter code: Phosphatidylglycerol--prolipoprotein diacylglyceryl transferase (315 aa).

2 helical membrane passes run 19 to 39 (FTIH…VWIL) and 93 to 113 (VWEG…VAFL). Arg-141 is a binding site for a 1,2-diacyl-sn-glycero-3-phospho-(1'-sn-glycerol). Transmembrane regions (helical) follow at residues 188–208 (LFHP…ALII) and 256–276 (VWTA…LYQY).

The protein belongs to the Lgt family.

Its subcellular location is the cell membrane. The enzyme catalyses L-cysteinyl-[prolipoprotein] + a 1,2-diacyl-sn-glycero-3-phospho-(1'-sn-glycerol) = an S-1,2-diacyl-sn-glyceryl-L-cysteinyl-[prolipoprotein] + sn-glycerol 1-phosphate + H(+). Its pathway is protein modification; lipoprotein biosynthesis (diacylglyceryl transfer). Functionally, catalyzes the transfer of the diacylglyceryl group from phosphatidylglycerol to the sulfhydryl group of the N-terminal cysteine of a prolipoprotein, the first step in the formation of mature lipoproteins. The chain is Phosphatidylglycerol--prolipoprotein diacylglyceryl transferase from Bifidobacterium longum (strain DJO10A).